Consider the following 263-residue polypeptide: MVYLVHQNEWRSVWVKTLAKLNKNVLINISYHGTKFHGYAVQNDYETVQSKLQDALAWIYESKIYVNASGRTDKGVHAINQYISFYIDDRISLEKLREILNRYGQNKWYIKWIKEVDRNFHARFSAKAKTYLYLIDYCANNPLFYDHAWIVNFQLDFNLIEKAIPILEGTHNFWSFSTADKDKGLRTIHKIDLKQEDNKVYIYITGDGFLRSMVRMIVGALYNIGIKKYDLNHLKWLLDNPKKGRAITKAPASGLYLYEVYYE.

Asp-73 acts as the Nucleophile in catalysis. Tyr-131 serves as a coordination point for substrate.

This sequence belongs to the tRNA pseudouridine synthase TruA family. Homodimer.

The catalysed reaction is uridine(38/39/40) in tRNA = pseudouridine(38/39/40) in tRNA. Its function is as follows. Formation of pseudouridine at positions 38, 39 and 40 in the anticodon stem and loop of transfer RNAs. The polypeptide is tRNA pseudouridine synthase A (Mycoplasmoides gallisepticum (strain R(low / passage 15 / clone 2)) (Mycoplasma gallisepticum)).